The primary structure comprises 151 residues: MATLESRLAEMLKVPVEALGFQLWGIEYVQAGKHSILRVFIDGENGINIEDCANTSRQVSAVLDVEDPISTEYTLEVSSPGVDRPLFTAEQYAAYVGEDVKVQLTMPVAGSRNLKGAITKVEGQMLSLNVNGKELVVALDNIRKGNVIAKF.

It belongs to the RimP family.

It localises to the cytoplasm. Required for maturation of 30S ribosomal subunits. In Shewanella putrefaciens (strain CN-32 / ATCC BAA-453), this protein is Ribosome maturation factor RimP.